We begin with the raw amino-acid sequence, 1402 residues long: Transcription factor SPT20 homolog (1402 aa).

Disordered regions lie at residues 1–29 (MNGNSKVHTEENKNEHQQEGKGGEQEQEQ), 60–107 (VNSL…LDTD), 114–133 (NNDSSNNTTTTTIPRQSSSS), 177–206 (QTTLPTNNNNNNNNNNNNNNNNNNNNNNIL), 786–817 (APSTSTSSSSSSGGTTTTTTATGTTPTTPTPV), 1136–1174 (PQQIQTQPLQQPPNQMAQSMISPQSTPSTSPSPQQQYQT), and 1199–1250 (QPLQ…PPQI). The segment covering 7–29 (VHTEENKNEHQQEGKGGEQEQEQ) has biased composition (basic and acidic residues). Positions 60 to 72 (VNSLSEPTPNEQQ) are enriched in polar residues. Low complexity predominate over residues 73 to 102 (NNNNNNNSNGNGNGNDETTSSKTTTIINSN). 6 stretches are compositionally biased toward low complexity: residues 183 to 204 (NNNNNNNNNNNNNNNNNNNNNN), 786 to 812 (APSTSTSSSSSSGGTTTTTTATGTTPT), 1136 to 1150 (PQQIQTQPLQQPPNQ), 1157 to 1174 (SPQSTPSTSPSPQQQYQT), 1199 to 1218 (QPLQQPQPQPQQQQQQQQQQ), and 1226 to 1250 (PQQFAQHLQQQQMQRPQAQLQPPQI).

It belongs to the SPT20 family.

The sequence is that of Transcription factor SPT20 homolog from Dictyostelium discoideum (Social amoeba).